A 257-amino-acid chain; its full sequence is Thiazole synthase (257 aa).

Residue Lys-95 is the Schiff-base intermediate with DXP of the active site. 1-deoxy-D-xylulose 5-phosphate contacts are provided by residues Gly-156, 182–183, and 204–205; these read AG and NT.

The protein belongs to the ThiG family. In terms of assembly, homotetramer. Forms heterodimers with either ThiH or ThiS.

The protein localises to the cytoplasm. It catalyses the reaction [ThiS sulfur-carrier protein]-C-terminal-Gly-aminoethanethioate + 2-iminoacetate + 1-deoxy-D-xylulose 5-phosphate = [ThiS sulfur-carrier protein]-C-terminal Gly-Gly + 2-[(2R,5Z)-2-carboxy-4-methylthiazol-5(2H)-ylidene]ethyl phosphate + 2 H2O + H(+). Its pathway is cofactor biosynthesis; thiamine diphosphate biosynthesis. Catalyzes the rearrangement of 1-deoxy-D-xylulose 5-phosphate (DXP) to produce the thiazole phosphate moiety of thiamine. Sulfur is provided by the thiocarboxylate moiety of the carrier protein ThiS. In vitro, sulfur can be provided by H(2)S. The sequence is that of Thiazole synthase from Vibrio vulnificus (strain CMCP6).